An 88-amino-acid polypeptide reads, in one-letter code: MSILSALTSISNPMKSSNSNVANGGSKLSMGANSVACGSCGGGNSSSGIINNSDGSQTTYYTYTSPTYQYGYTYSYGSSFSSSSCGCN.

A disordered region spans residues M1–A22.

It belongs to the hssA/B family.

In Dictyostelium discoideum (Social amoeba), this protein is HssA/B-like protein 6 (hssl6).